We begin with the raw amino-acid sequence, 545 residues long: Probable quinate permease (545 aa).

Topologically, residues 1 to 22 (MSILSLVEDRPTPKEVYNWRIY) are cytoplasmic. Residues 23–43 (LLAAVASFTSCMIGYDSAFIG) traverse the membrane as a helical segment. Residues 44 to 66 (TTISLQSFKDEFNWDAMSTDKQN) lie on the Extracellular side of the membrane. The helical transmembrane segment at 67 to 87 (LISANIVSLYQAGAFFGAFFA) threads the bilayer. Over 88 to 97 (YPMGHFWGRR) the chain is Cytoplasmic. The chain crosses the membrane as a helical span at residues 98 to 118 (WGLFVAALVFTLGAGLMLGAN). Residues 119–130 (GDRGLGLIYGGR) lie on the Extracellular side of the membrane. Residues 131–151 (VLAGLGVGAGSNITPIYISEL) traverse the membrane as a helical segment. The Cytoplasmic segment spans residues 152 to 159 (APPAIRGR). Residues 160 to 180 (LVGVYELGWQIGGLVGFWICF) traverse the membrane as a helical segment. The Extracellular portion of the chain corresponds to 181-193 (GVDDTLAPSHKQW). Residues 194-214 (IIPFAVQLIPSGLLLLGILFV) traverse the membrane as a helical segment. At 215–285 (RESPRWLFLR…VWSNKRIMYR (71 aa)) the chain is on the cytoplasmic side. A helical membrane pass occupies residues 286-306 (LFLGSMLFLWQNGSGINAINY). The Extracellular portion of the chain corresponds to 307 to 325 (YSPTVFKSIGLRGANTSLL). The helical transmembrane segment at 326 to 346 (TTGIFGVVKTVVTFVWLLWLI) threads the bilayer. At 347 to 352 (DRLGRR) the chain is on the cytoplasmic side. Residues 353-373 (LLLMIGAAGGSVCLWIVGAYI) traverse the membrane as a helical segment. The Extracellular portion of the chain corresponds to 374-384 (KVAKPTERDPD). A helical membrane pass occupies residues 385 to 405 (APLDGGGIAAMFFFYLWTVFY). Over 406 to 457 (TPSWNGTPWVMNSEMFDPNVRSLAQACAAGSNWLWNFLISRFTPQMFAKMEY) the chain is Cytoplasmic. The helical transmembrane segment at 458–478 (GVYFFFASLMILSIVFVFFLI) threads the bilayer. Residues 479-545 (PETKGIPLES…VEQAESVPKA (67 aa)) are Extracellular-facing. Positions 520–545 (IEESGYTKSDAQQVERVEQAESVPKA) are disordered.

This sequence belongs to the major facilitator superfamily. Sugar transporter (TC 2.A.1.1) family. Interacts with creB. Ubiquitinated. Deubiquitinated by creB, probably to control its activity or amount.

It localises to the cell membrane. Functionally, integral membrane transporter that imports quinic acid to be catabolized as a carbon source. This Aspergillus terreus (strain NIH 2624 / FGSC A1156) protein is Probable quinate permease (qutD).